The sequence spans 159 residues: Small ribosomal subunit protein uS7 (159 aa).

This sequence belongs to the universal ribosomal protein uS7 family. As to quaternary structure, part of the 30S ribosomal subunit. Contacts proteins S9 and S11.

Its function is as follows. One of the primary rRNA binding proteins, it binds directly to 16S rRNA where it nucleates assembly of the head domain of the 30S subunit. Is located at the subunit interface close to the decoding center, probably blocks exit of the E-site tRNA. This chain is Small ribosomal subunit protein uS7, found in Wolbachia sp. subsp. Brugia malayi (strain TRS).